The sequence spans 274 residues: Cytochrome b-c1 complex subunit Rieske, mitochondrial (274 aa).

Topologically, residues 79–103 (SHTDIKVPDFSDYRRSEVLDKTKSS) are mitochondrial matrix. Residues 104 to 140 (RESSDARKGFSYLVTAATAVGVTYAAKSIVTQFVSSM) form a helical membrane-spanning segment. Topologically, residues 141–274 (SASADVLAMS…FTGDDMVIVG (134 aa)) are mitochondrial intermembrane. The region spanning 187 to 272 (EAAVELSQLR…YEFTGDDMVI (86 aa)) is the Rieske domain. Positions 217, 219, 236, 239, and 241 each coordinate [2Fe-2S] cluster. An intrachain disulfide couples Cys222 to Cys238.

This sequence belongs to the Rieske iron-sulfur protein family. In terms of assembly, component of the ubiquinol-cytochrome c oxidoreductase (cytochrome b-c1 complex, complex III, CIII), a multisubunit enzyme composed of 11 subunits. The complex is composed of 3 respiratory subunits cytochrome b, cytochrome c1 and Rieske protein UQCRFS1, 2 core protein subunits UQCRC1/QCR1 and UQCRC2/QCR2, and 6 low-molecular weight protein subunits UQCRH/QCR6, UQCRB/QCR7, UQCRQ/QCR8, UQCR10/QCR9, UQCR11/QCR10 and subunit 9, the cleavage product of Rieske protein UQCRFS1. The complex exists as an obligatory dimer and forms supercomplexes (SCs) in the inner mitochondrial membrane with NADH-ubiquinone oxidoreductase (complex I, CI) and cytochrome c oxidase (complex IV, CIV), resulting in different assemblies (supercomplex SCI(1)III(2)IV(1) and megacomplex MCI(2)III(2)IV(2)). Incorporation of the Rieske protein UQCRFS1 is the penultimate step in complex III assembly. Interacts with TTC19, which is involved in the clearance of UQCRFS1 fragments. Component of the ubiquinol-cytochrome c oxidoreductase (cytochrome b-c1 complex, complex III, CIII). Subunit 9 corresponds to the mitochondrial targeting sequence (MTS) of Rieske protein UQCRFS1. It is retained after processing and incorporated inside complex III, where it remains bound to the complex and localizes between the 2 core subunits UQCRC1/QCR1 and UQCRC2/QCR2. Requires [2Fe-2S] cluster as cofactor. In terms of processing, proteolytic processing is necessary for the correct insertion of UQCRFS1 in the complex III dimer. Several fragments are generated during UQCRFS1 insertion, most probably due to the endogenous matrix-processing peptidase (MPP) activity of the 2 core protein subunits UQCRC1/QCR1 and UQCRC2/QCR2, which are homologous to the 2 mitochondrial-processing peptidase (MPP) subunits beta-MPP and alpha-MPP respectively. The action of the protease is also necessary for the clearance of the UQCRFS1 fragments.

It is found in the mitochondrion inner membrane. The catalysed reaction is a quinol + 2 Fe(III)-[cytochrome c](out) = a quinone + 2 Fe(II)-[cytochrome c](out) + 2 H(+)(out). Functionally, component of the ubiquinol-cytochrome c oxidoreductase, a multisubunit transmembrane complex that is part of the mitochondrial electron transport chain which drives oxidative phosphorylation. The respiratory chain contains 3 multisubunit complexes succinate dehydrogenase (complex II, CII), ubiquinol-cytochrome c oxidoreductase (cytochrome b-c1 complex, complex III, CIII) and cytochrome c oxidase (complex IV, CIV), that cooperate to transfer electrons derived from NADH and succinate to molecular oxygen, creating an electrochemical gradient over the inner membrane that drives transmembrane transport and the ATP synthase. The cytochrome b-c1 complex catalyzes electron transfer from ubiquinol to cytochrome c, linking this redox reaction to translocation of protons across the mitochondrial inner membrane, with protons being carried across the membrane as hydrogens on the quinol. In the process called Q cycle, 2 protons are consumed from the matrix, 4 protons are released into the intermembrane space and 2 electrons are passed to cytochrome c. The Rieske protein is a catalytic core subunit containing a [2Fe-2S] iron-sulfur cluster. It cycles between 2 conformational states during catalysis to transfer electrons from the quinol bound in the Q(0) site in cytochrome b to cytochrome c1. Incorporation of UQCRFS1 is the penultimate step in complex III assembly. Its function is as follows. Component of the ubiquinol-cytochrome c oxidoreductase (cytochrome b-c1 complex, complex III, CIII). UQCRFS1 undergoes proteolytic processing once it is incorporated in the complex III dimer. One of the fragments, called subunit 9, corresponds to its mitochondrial targeting sequence (MTS). The proteolytic processing is necessary for the correct insertion of UQCRFS1 in the complex III dimer, but the persistence of UQCRFS1-derived fragments may prevent newly imported UQCRFS1 to be processed and assembled into complex III and is detrimental for the complex III structure and function. This Lagothrix lagotricha (Brown woolly monkey) protein is Cytochrome b-c1 complex subunit Rieske, mitochondrial (UQCRFS1).